The chain runs to 510 residues: Acyl-CoA desaturase 1 (510 aa).

Residues 1 to 112 (MPTSGTTIEL…TLNNWHQHLN (112 aa)) lie on the Cytoplasmic side of the membrane. A helical transmembrane segment spans residues 113–133 (WLNMVLVCGMPMIGWYFALSG). Residues 134-138 (KVPLH) lie on the Lumenal side of the membrane. The helical transmembrane segment at 139–159 (LNVFLFSVFYYAVGGVSITAG) threads the bilayer. Residues 160 to 255 (YHRLWSHRSY…DWTIRFQHRH (96 aa)) are Cytoplasmic-facing. Fe cation contacts are provided by histidine 161, histidine 166, histidine 198, histidine 201, and histidine 202. The short motif at 161–166 (HRLWSH) is the Histidine box-1 element. Positions 198–202 (HRIHH) match the Histidine box-2 motif. A helical transmembrane segment spans residues 256 to 276 (YILLMLLTAFVIPTLICGYFF). Residues 277 to 280 (NDYM) lie on the Lumenal side of the membrane. A helical membrane pass occupies residues 281–301 (GGLIYAGFIRVFVIQQATFCI). The Cytoplasmic portion of the chain corresponds to 302 to 510 (NSLAHYIGTQ…GEIYETGKFF (209 aa)). Residues histidine 306, histidine 335, histidine 338, and histidine 339 each contribute to the Fe cation site. A Histidine box-3 motif is present at residues 335–339 (HNFHH). Residues 409 to 487 (LPMWDKQTFL…LADMRVAVIK (79 aa)) form the Cytochrome b5 heme-binding domain. Heme is bound by residues histidine 444 and histidine 470.

The protein belongs to the fatty acid desaturase type 1 family. Fe(2+) is required as a cofactor.

Its subcellular location is the endoplasmic reticulum membrane. It catalyses the reaction octadecanoyl-CoA + 2 Fe(II)-[cytochrome b5] + O2 + 2 H(+) = (9Z)-octadecenoyl-CoA + 2 Fe(III)-[cytochrome b5] + 2 H2O. It carries out the reaction hexadecanoyl-CoA + 2 Fe(II)-[cytochrome b5] + O2 + 2 H(+) = (9Z)-hexadecenoyl-CoA + 2 Fe(III)-[cytochrome b5] + 2 H2O. Stearoyl-CoA desaturase that utilizes O(2) and electrons from reduced cytochrome b5 to introduce the first double bond into saturated fatty acyl-CoA substrates. Catalyzes the insertion of a cis double bond at the delta-9 position into fatty acyl-CoA substrates including palmitoyl-CoA and stearoyl-CoA. Required for the biosynthesis of membrane phospholipids, cholesterol esters and triglycerides. Regulates fatty acid desaturation, that is, the ratio of unsaturated versus saturated fatty acyl chains, by competing with the acyltransferase STC1 for the common substrate C16:0-CoA. SCT1 sequesters C16:0-CoA into lipids, thereby shielding it from desaturation by OLE1. The chain is Acyl-CoA desaturase 1 (OLE1) from Saccharomyces cerevisiae (strain ATCC 204508 / S288c) (Baker's yeast).